A 76-amino-acid chain; its full sequence is Acyl carrier protein (76 aa).

The region spanning 1 to 76 (MSVEEKVKKI…DAIDYVSNKQ (76 aa)) is the Carrier domain. The residue at position 36 (Ser-36) is an O-(pantetheine 4'-phosphoryl)serine.

This sequence belongs to the acyl carrier protein (ACP) family. In terms of processing, 4'-phosphopantetheine is transferred from CoA to a specific serine of apo-ACP by AcpS. This modification is essential for activity because fatty acids are bound in thioester linkage to the sulfhydryl of the prosthetic group.

It localises to the cytoplasm. It functions in the pathway lipid metabolism; fatty acid biosynthesis. Its function is as follows. Carrier of the growing fatty acid chain in fatty acid biosynthesis. This chain is Acyl carrier protein, found in Nitratidesulfovibrio vulgaris (strain ATCC 29579 / DSM 644 / CCUG 34227 / NCIMB 8303 / VKM B-1760 / Hildenborough) (Desulfovibrio vulgaris).